The following is a 463-amino-acid chain: A-type ATP synthase subunit B (463 aa).

This sequence belongs to the ATPase alpha/beta chains family. As to quaternary structure, has multiple subunits with at least A(3), B(3), C, D, E, F, H, I and proteolipid K(x).

The protein localises to the cell membrane. Component of the A-type ATP synthase that produces ATP from ADP in the presence of a proton gradient across the membrane. The B chain is a regulatory subunit. The sequence is that of A-type ATP synthase subunit B from Desulfurococcus sp. (strain SY).